Consider the following 344-residue polypeptide: UDP-3-O-acylglucosamine N-acyltransferase (344 aa).

H244 (proton acceptor) is an active-site residue.

It belongs to the transferase hexapeptide repeat family. LpxD subfamily. In terms of assembly, homotrimer.

It carries out the reaction a UDP-3-O-[(3R)-3-hydroxyacyl]-alpha-D-glucosamine + a (3R)-hydroxyacyl-[ACP] = a UDP-2-N,3-O-bis[(3R)-3-hydroxyacyl]-alpha-D-glucosamine + holo-[ACP] + H(+). It participates in bacterial outer membrane biogenesis; LPS lipid A biosynthesis. Functionally, catalyzes the N-acylation of UDP-3-O-acylglucosamine using 3-hydroxyacyl-ACP as the acyl donor. Is involved in the biosynthesis of lipid A, a phosphorylated glycolipid that anchors the lipopolysaccharide to the outer membrane of the cell. The polypeptide is UDP-3-O-acylglucosamine N-acyltransferase (Pseudoalteromonas atlantica (strain T6c / ATCC BAA-1087)).